We begin with the raw amino-acid sequence, 118 residues long: Cobalt transport protein CbiN (118 aa).

A run of 2 helical transmembrane segments spans residues 7–27 (INALLLLAVAALAVLPLVLGL) and 70–90 (SALFALQAALGAGVLAYYFGL). Residues 99–118 (ERASAASGAAAAPGDAPEGD) form a disordered region. The span at 102 to 118 (SAASGAAAAPGDAPEGD) shows a compositional bias: low complexity.

The protein belongs to the CbiN family. As to quaternary structure, forms an energy-coupling factor (ECF) transporter complex composed of an ATP-binding protein (A component, CbiO), a transmembrane protein (T component, CbiQ) and 2 possible substrate-capture proteins (S components, CbiM and CbiN) of unknown stoichimetry.

It localises to the cell membrane. It functions in the pathway cofactor biosynthesis; adenosylcobalamin biosynthesis. Its function is as follows. Part of the energy-coupling factor (ECF) transporter complex CbiMNOQ involved in cobalt import. This is Cobalt transport protein CbiN from Streptomyces coelicolor (strain ATCC BAA-471 / A3(2) / M145).